Consider the following 461-residue polypeptide: MAEKKPELQRGLEARHIELIALGGTIGVGLFMGAASTLKWAGPSVLLAYIIAGLFVFFIMRSMGEMLFLEPVTGSFAVYAHRYMSPFFGYLTAWSYWFMWMAVGISEITAIGVYVQFWFPEMAQWIPALIAVGLVALANLAAVRLYGEIEFWFAMIKVTTIIVMIIIGLGVIFFGFGNGGQAIGFGNLTEHGGFFAGGWKGFLTALCIVVASYQGVELIGITAGEAKNPQVTLRSAVGKVLWRILIFYVGAIFVIVTIFPWNEIGSNGSPFVLTFAKIGITAAAGIINFVVLTAALSGCNSGMYSCGRMLYALAKNRQLPAAVAKVSRHGVPVAGVALSILILLVGSCLNYIIPNPQRVFVYVYSASVLPGMVPWFVILISQLRFRRAHKEAIADHPFRSIMFPWANYLTMAFLVCVLIGMYFNEDTRMSLFVGVIFLLAVTLVYKVFGLNRHGTAHKVGE.

The next 12 membrane-spanning stretches (helical) occupy residues 17-37, 40-60, 97-117, 123-143, 156-176, 201-221, 244-264, 278-298, 333-353, 360-380, 401-421, and 430-450; these read IELIALGGTIGVGLFMGAAST, WAGPSVLLAYIIAGLFVFFIM, WFMWMAVGISEITAIGVYVQF, AQWIPALIAVGLVALANLAAV, IKVTTIIVMIIIGLGVIFFGF, GFLTALCIVVASYQGVELIGI, ILIFYVGAIFVIVTIFPWNEI, IGITAAAGIINFVVLTAALSG, VAGVALSILILLVGSCLNYII, FVYVYSASVLPGMVPWFVILI, IMFPWANYLTMAFLVCVLIGM, and SLFVGVIFLLAVTLVYKVFGL.

This sequence belongs to the amino acid-polyamine-organocation (APC) superfamily.

It is found in the cell inner membrane. It catalyses the reaction L-threonine(in) + H(+)(in) = L-threonine(out) + H(+)(out). The enzyme catalyses L-serine(in) + H(+)(in) = L-serine(out) + H(+)(out). Functionally, permease that mediates the proton-dependent threonine and serine uptake. The chain is Threonine/serine transporter ThrP from Salmonella typhi.